The following is a 422-amino-acid chain: Dihydroorotase (422 aa).

2 residues coordinate Zn(2+): histidine 59 and histidine 61. Residues 61–63 (HFR) and asparagine 93 each bind substrate. Zn(2+) is bound by residues aspartate 150, histidine 177, and histidine 230. Asparagine 276 is a binding site for substrate. A Zn(2+)-binding site is contributed by aspartate 303. Aspartate 303 is an active-site residue. Histidine 307 provides a ligand contact to substrate.

Belongs to the metallo-dependent hydrolases superfamily. DHOase family. Class I DHOase subfamily. Zn(2+) serves as cofactor.

The catalysed reaction is (S)-dihydroorotate + H2O = N-carbamoyl-L-aspartate + H(+). It functions in the pathway pyrimidine metabolism; UMP biosynthesis via de novo pathway; (S)-dihydroorotate from bicarbonate: step 3/3. Catalyzes the reversible cyclization of carbamoyl aspartate to dihydroorotate. This Streptococcus pyogenes serotype M1 protein is Dihydroorotase.